We begin with the raw amino-acid sequence, 418 residues long: Tryptophan synthase beta chain (418 aa).

A compositionally biased stretch (polar residues) spans 1-18 (MTSTLPKASQPDPSSLQP). A disordered region spans residues 1 to 28 (MTSTLPKASQPDPSSLQPSARPGAHGRF). Lys111 is subject to N6-(pyridoxal phosphate)lysine.

The protein belongs to the TrpB family. As to quaternary structure, tetramer of two alpha and two beta chains. Pyridoxal 5'-phosphate serves as cofactor.

The enzyme catalyses (1S,2R)-1-C-(indol-3-yl)glycerol 3-phosphate + L-serine = D-glyceraldehyde 3-phosphate + L-tryptophan + H2O. It participates in amino-acid biosynthesis; L-tryptophan biosynthesis; L-tryptophan from chorismate: step 5/5. Its function is as follows. The beta subunit is responsible for the synthesis of L-tryptophan from indole and L-serine. The sequence is that of Tryptophan synthase beta chain from Synechococcus sp. (strain CC9902).